The following is a 118-amino-acid chain: Mu-like prophage FluMu tail tube protein (118 aa).

Residues 12–32 form a disordered region; sequence RLNGKEWPSDNDGTLTPGGKE.

The protein to phage Mu protein M.

The sequence is that of Mu-like prophage FluMu tail tube protein from Haemophilus influenzae (strain ATCC 51907 / DSM 11121 / KW20 / Rd).